The following is a 543-amino-acid chain: CTP synthase (543 aa).

Positions 1–265 (MTNYIFVTGG…DQLVVDRFGL (265 aa)) are amidoligase domain. Residue Ser13 participates in CTP binding. Residue Ser13 coordinates UTP. Residues 14 to 19 (SLGKGI) and Asp71 each bind ATP. Asp71 and Glu139 together coordinate Mg(2+). CTP-binding positions include 146 to 148 (DIE), 186 to 191 (KTKPTQ), and Lys222. UTP-binding positions include 186 to 191 (KTKPTQ) and Lys222. Position 238-240 (238-240 (KDV)) interacts with ATP. Residues 290-541 (NIGMIGKYVE…VAAAGKYQKE (252 aa)) enclose the Glutamine amidotransferase type-1 domain. Gly351 lines the L-glutamine pocket. Cys378 acts as the Nucleophile; for glutamine hydrolysis in catalysis. L-glutamine contacts are provided by residues 379–382 (LGMQ), Glu402, and Arg469. Residues His514 and Glu516 contribute to the active site.

The protein belongs to the CTP synthase family. Homotetramer.

The enzyme catalyses UTP + L-glutamine + ATP + H2O = CTP + L-glutamate + ADP + phosphate + 2 H(+). The catalysed reaction is L-glutamine + H2O = L-glutamate + NH4(+). It catalyses the reaction UTP + NH4(+) + ATP = CTP + ADP + phosphate + 2 H(+). It functions in the pathway pyrimidine metabolism; CTP biosynthesis via de novo pathway; CTP from UDP: step 2/2. Its activity is regulated as follows. Allosterically activated by GTP, when glutamine is the substrate; GTP has no effect on the reaction when ammonia is the substrate. The allosteric effector GTP functions by stabilizing the protein conformation that binds the tetrahedral intermediate(s) formed during glutamine hydrolysis. Inhibited by the product CTP, via allosteric rather than competitive inhibition. Functionally, catalyzes the ATP-dependent amination of UTP to CTP with either L-glutamine or ammonia as the source of nitrogen. Regulates intracellular CTP levels through interactions with the four ribonucleotide triphosphates. The sequence is that of CTP synthase from Alteromonas mediterranea (strain DSM 17117 / CIP 110805 / LMG 28347 / Deep ecotype).